Consider the following 316-residue polypeptide: DMOA farnesyltransferase nvfB (316 aa).

9 consecutive transmembrane segments (helical) span residues 47-67 (VVGVVFGAAVAPTKLPATILL), 71-91 (LILVLWSLFLRSAGCVWNDVI), 115-135 (WNAVMLTAGIFACGGSLLSFL), 139-159 (CAIEALIEIFFALLYPFGKRF), 162-182 (FPQLILVNIGWAIPMSMHSLG), 191-211 (PTFFMFLFIALVIVMIDVVYS), 234-254 (IELLSYAFFYASTGALLAAGY), 258-278 (LGIPFTVLSVGGHFGGFLYFL), and 294-314 (KLACLIASLFWVVGLFVEYYL).

This sequence belongs to the UbiA prenyltransferase family.

The protein localises to the membrane. The enzyme catalyses 3,5-dimethylorsellinate + (2E,6E)-farnesyl diphosphate = (3R)-3-farnesyl-6-hydroxy-2,3,5-trimethyl-4-oxocyclohexa-1,5-diene-1-carboxylate + diphosphate + H(+). Its pathway is secondary metabolite biosynthesis; terpenoid biosynthesis. Functionally, DMOA farnesyltransferase; part of the gene cluster that mediates the biosynthesis of novofumigatonin, a heavily oxygenated meroterpenoid containing a unique orthoester moiety. The first step of the pathway is the synthesis of 3,5-dimethylorsellinic acid (DMOA) by the polyketide synthase nvfA via condensation of one acetyl-CoA starter unit with 3 malonyl-CoA units and 2 methylations. DMOA is then converted to farnesyl-DMOA by the farnesyltransferase nvfB. Epoxydation by FAD-dependent monooxygenase nvfK, followed by a protonation-initiated cyclization catalyzed by the terpene cyclase nvfL leads to the production of asnavolin H. The short chain dehydrogenase nvfC then as a 3-OH dehydrogenase of asnovolin H to yield chemesin D. There are two branches to synthesize asnovolin A from chemesin D. In one branch, chemesin D undergoes Baeyer-Villiger oxidation by nvfH, methylation by nvfJ, and enoyl reduction by the nvfM D enoylreductase that reduces the double bond between C-5'and C-6', to form respectively asnovolin I, asnovolin K, and asnovolin A. In the other branch, the methylation precedes the Baeyer-Villiger oxidation and the enoyl reduction to yield asnovolin A via the asnovolin J intermediate. Asnovolin A is further converted to fumigatonoid A by the Fe(II)/2-oxoglutarate-dependent dioxygenase nvfI that catalyzes an endoperoxidation reaction. The alpha/beta hydrolase nvfD then acts as an epimerase that converts fumigatonoid A to its C-5' epimer, which then undergoes spontaneous or nvfD-catalyzed lactonization. The following step utilizes the ketoreductase nvfG to produce fumigatonoid B. The dioxygenase nvfE further converts fumigatonoid B into fumigatonoid C. Finally the Fe(II)/2-oxoglutarate-dependent dioxygenase nvfF catalyzes two rounds of oxidation to transform fumigatonoid C into the end product, novofumigatonin A. The chain is DMOA farnesyltransferase nvfB from Aspergillus novofumigatus (strain IBT 16806).